We begin with the raw amino-acid sequence, 293 residues long: Calcium uniporter protein 2, mitochondrial (293 aa).

Residues 1 to 33 constitute a mitochondrion transit peptide; that stretch reads MWSVMGLVRRTAMSSTVNKASPVRSLLGGFRCL. Residues 168 to 188 form a helical membrane-spanning segment; sequence ILWGGLGYSVVQIGIFVRLTF. The Selectivity filter motif lies at 193-201; the sequence is WDVMEPITF. Glu197 contributes to the Ca(2+) binding site. Residues 198 to 218 form a helical membrane-spanning segment; sequence PITFFTTATGIIVGYAYFLMT.

Belongs to the MCU (TC 1.A.77) family.

It is found in the mitochondrion inner membrane. It catalyses the reaction Ca(2+)(in) = Ca(2+)(out). Functionally, mitochondrial inner membrane calcium uniporter that mediates calcium uptake into mitochondria. Constitutes a pore-forming and calcium-conducting subunit. Mitochondrial calcium homeostasis plays key roles in cellular physiology and regulates cell bioenergetics, cytoplasmic calcium signals and activation of cell death pathways. The sequence is that of Calcium uniporter protein 2, mitochondrial from Arabidopsis thaliana (Mouse-ear cress).